A 518-amino-acid chain; its full sequence is Glutamate--cysteine ligase (518 aa).

Belongs to the glutamate--cysteine ligase type 1 family. Type 1 subfamily.

It catalyses the reaction L-cysteine + L-glutamate + ATP = gamma-L-glutamyl-L-cysteine + ADP + phosphate + H(+). The protein operates within sulfur metabolism; glutathione biosynthesis; glutathione from L-cysteine and L-glutamate: step 1/2. The protein is Glutamate--cysteine ligase of Cronobacter sakazakii (strain ATCC BAA-894) (Enterobacter sakazakii).